A 1102-amino-acid chain; its full sequence is NSIVRKRIEISTNENRGQLVVSSDKYSLVDNLFYNLHDYASQSKHNIIIDDGKVEKLLNLICNVLDRNVNELNDSVFLIIKDIEKECKYYVSNVLYRSVGSRKNRGREVEWSSYKYNKEFNKVLDKGIISINNEVLKFISKEREGYIERVESIAVTVKNKILELNNNIAEVLLSIKNKVIVLNKESVVAKVEEINYEVHNKFIKGNGNTNFSNRNLTEIKSILKELNKMEILDNRINKLSTKESDLLKVIKEILDSNLIIEDKQLAIEKTVVEYELTFFRHNMDTHETRNKIIHNIYPKLNKAYTELLANYKLNRYSKIKKSIHLISNKSEGTKSKEMIKLIVVLVILYIGIDKCISYSFYQIINLLTNARDGTSRTNIAINLGFRIIKVLKYIKLDENPSLNALYPINKLKDEISKLDNEGIYWIGDTLLGLITANCDIVVEELKWNSGKDSQLEVRINDKFISNLTVSGINIVQLPMLTEPRKISSDGLYFPYINSDTTNLHLFEGELIKGKYNLRDHTEASEMLYSSINYLNSIKFKINKAMLNFILAEWDNKDSKLFKGYNMLKPILETDSKEIKEEKVSSNSKYTLYSNIISLASLYKDNEFYLPVYVDFRGRVYPLSNYISYQGGDLARSLILFADTKCVLNNSGKECLNVYLANLAGYDKLPWSERLTKVDGIIKEYLESNEISNTKYIEDNIDKISEPFQFISIMYAKLLSISNPKANISNPILFDASCSGIQHIAALTLEKELASNVNLYTDSSNPKEDYPQDFYTYALEKIRDKLINSDITELRDIKLNRKIIKRSVMTIPYNISMAGIGEHLMEHFTVKTVLKYRYVVIPGSATISSKDVYLDYSKYGQLCKIIYFVLTKELPSLRLLSNYFESMIDIFVKLNIPITWVTPSGLKIKYTNIKFKPQKVKTSVLNTSKITTIKLPTDSLDVLSTKRSFMPNFIHSLDASNVHLLLNSVSYKNLPVYTVHDCFASTANNMFKLEKLVKNAFINIYFNDEGYLLKLHKHFVDTIISATDPYLSNGNIENENDIKGLTTERLEYKPLLSSNYVADRISTKADIIKIPDLPAGYKNKNKNINEFVKGILNSKYFIG.

Active-site residues include aspartate 734, lysine 804, and aspartate 980.

Belongs to the phage and mitochondrial RNA polymerase family.

Its subcellular location is the mitochondrion. The catalysed reaction is RNA(n) + a ribonucleoside 5'-triphosphate = RNA(n+1) + diphosphate. In terms of biological role, DNA-dependent RNA polymerase catalyzes the transcription of DNA into RNA using the four ribonucleoside triphosphates as substrates. The sequence is that of Probable DNA-directed RNA polymerase from Agaricus bitorquis (Pavement mushroom).